We begin with the raw amino-acid sequence, 587 residues long: Transport inhibitor response 1-like protein Os05g0150500 (587 aa).

The F-box domain occupies 6–63 (SRAACAAAAPPWHSLPDEVWEHAFSFLPAAADRGAAAGACSSWLRAERRSRRRLAVAN). A 1D-myo-inositol hexakisphosphate-binding site is contributed by Lys-85. Residues 92–93 (DF) form an interaction with auxin-responsive proteins region. Residues 124–125 (KR) and Arg-355 contribute to the 1D-myo-inositol hexakisphosphate site. Residues 358–363 (PSDPFG) are interaction with auxin-responsive proteins. 409–411 (CFR) lines the 1D-myo-inositol hexakisphosphate pocket. An interaction with auxin-responsive proteins region spans residues 413 to 417 (CILEP). Arg-444 provides a ligand contact to 1D-myo-inositol hexakisphosphate. Positions 472-473 (AF) are interaction with auxin-responsive proteins. 1D-myo-inositol hexakisphosphate-binding positions include 492-493 (KK) and Arg-517.

In terms of assembly, part of a SCF (SKP1-cullin-F-box) protein ligase complex. May interact with auxin and auxin-responsive proteins.

It localises to the nucleus. The protein operates within protein modification; protein ubiquitination. This Oryza sativa subsp. japonica (Rice) protein is Transport inhibitor response 1-like protein Os05g0150500.